The primary structure comprises 552 residues: Cytochrome P450 97B1, chloroplastic (552 aa).

The N-terminal 52 residues, 1–52 (MVAAPISTVKLTDANLHTRFHSSSSSTPSTLSLPLSLHFHFSSHSKRFSSIR), are a transit peptide targeting the chloroplast. Cysteine 528 lines the heme pocket.

The protein belongs to the cytochrome P450 family. Requires heme as cofactor.

It is found in the plastid. It localises to the chloroplast membrane. This chain is Cytochrome P450 97B1, chloroplastic (CYP97B1), found in Pisum sativum (Garden pea).